A 37-amino-acid chain; its full sequence is MKVRASVKKICDKCRVIRRNRKIIIICNNAKHKQRQG.

This sequence belongs to the bacterial ribosomal protein bL36 family.

It is found in the plastid. The protein resides in the chloroplast. The sequence is that of Large ribosomal subunit protein bL36c from Gracilaria tenuistipitata var. liui (Red alga).